The sequence spans 181 residues: Transmembrane protein 154 (181 aa).

An N-terminal signal peptide occupies residues 1–22; it reads MTVPCAALVLALGLAFGQSSQG. Residues 19-47 form a disordered region; sequence SSQGNDEESEYSGQSITEEENSEDETTRS. The Extracellular portion of the chain corresponds to 23–74; that stretch reads NDEESEYSGQSITEEENSEDETTRSALATVTTEALAENVNSTHTNDTSNQVE. Residues 75–95 traverse the membrane as a helical segment; the sequence is FILMVAIPLAALLILLFMVLI. Over 96-181 the chain is Cytoplasmic; the sequence is ATYFKSKRPK…PNPSPSDNES (86 aa). The interval 103 to 122 is disordered; sequence RPKQEPSSQGSQSALQTHEL. The span at 107–118 shows a compositional bias: polar residues; sequence EPSSQGSQSALQ. Phosphotyrosine is present on Tyr-160. A disordered region spans residues 161-181; that stretch reads ECLPTLKEEKEPNPSPSDNES. Ser-177 carries the phosphoserine modification.

It is found in the membrane. In Mus musculus (Mouse), this protein is Transmembrane protein 154 (Tmem154).